The primary structure comprises 288 residues: Solute carrier family 25 member 47-B (288 aa).

Solcar repeat units lie at residues 1 to 83 (MHLA…ILQF), 99 to 191 (AHIF…ICEI), and 199 to 286 (PGWP…VVRL). Transmembrane regions (helical) follow at residues 3–23 (LADFLAGSVGGAFGVAVGYPL), 58–75 (GMSMPISTVSISSSLVFG), 101–121 (IFLAGFTGGVTQVLVMAPADI), 175–195 (GPSFATYFLTYNTICEILTTE), 199–219 (PGWPVVLLAGGVSGMCGWAVG), and 257–277 (VLFRGLTVNCIRAFPVNMSVF).

It belongs to the mitochondrial carrier (TC 2.A.29) family.

It localises to the mitochondrion inner membrane. The sequence is that of Solute carrier family 25 member 47-B (slc25a47b) from Danio rerio (Zebrafish).